Consider the following 2879-residue polypeptide: Peramine synthetase ppzA (2879 aa).

Positions 1–12 (MTYDEGGHRNNE) are enriched in basic and acidic residues. Residues 1 to 52 (MTYDEGGHRNNEETPQDVNMSSNNEGMSTSSPTGSYGEIIGQATVSVPQEDQ) form a disordered region. The span at 16–34 (QDVNMSSNNEGMSTSSPTG) shows a compositional bias: polar residues. Positions 351-747 (QEQCRLQPNT…VGRKDTQVKI (397 aa)) are adenylation 1. The Carrier 1 domain occupies 882–958 (QPLSDMERLL…DLSRQSKYIE (77 aa)). Residue Ser-919 is modified to O-(pantetheine 4'-phosphoryl)serine. The segment at 997–1410 (DAYPCTPLQE…ITILTTEDLE (414 aa)) is condensation. The interval 1433 to 1827 (DKVQHRPNAP…LSFVRRKDTT (395 aa)) is adenylation 2. Residues 1958–2050 (LEIGCGSGMM…KYLVKLIQDI (93 aa)) form a methylation (Met) domain region. Residues 2370–2448 (WPTTDTGKEL…RLLLDCCCDD (79 aa)) form the Carrier 2 domain. Ser-2407 is modified (O-(pantetheine 4'-phosphoryl)serine). The segment at 2500 to 2817 (TVLLTGANGF…LEDMLQDLDD (318 aa)) is thiesterase (TE) domain.

It belongs to the NRP synthetase family. It depends on pantetheine 4'-phosphate as a cofactor.

The catalysed reaction is (S)-1-pyrroline-5-carboxylate + L-arginine + S-adenosyl-L-methionine + 2 ATP = peramine + 2 AMP + S-adenosyl-L-homocysteine + 2 diphosphate + H2O + 2 H(+). The protein operates within secondary metabolite biosynthesis. Functionally, nonribosomal peptide synthetase; part of the gene cluster that mediates the biosynthesis of pyrrolopyrazines, secondary metabolites showing insecticidal activity. The single multifunctional NRPS ppzA is responsible for the biosynthesis of peramine. The condensation domain of ppzA is proposed to catalyze formation of a peptide bond between 1-pyrroline-5-carboxylate and arginine. The methylation domain of ppzA would catalyze the N-methylation of the alpha-amino group of arginine. The reductase domain is proposed to be responsible for reduction of the thioester and the cyclization to form an iminium ion resulting in release from the peptide synthetase. Deprotonation of this intermediate and oxidation of the pyrroline ring would give rise to peramine. This final oxidation to give the pyrrole functionality may be spontaneous. In Epichloe species that produce only peramine, the peramine synthetase gene is not localized in a gene cluster, in contrast to Metarhizium species that contain additional pyrrolopyrazine biosynthesis genes. The 2-oxoglutarate-Fe(II) type oxidoreductase ppzC hydroxylates peramine to yield the newly identified compound 8-hydroxyperamine whereas ppzD converts L-proline into trans-4-hydroxy-L-proline, a precursor of peramine biosynthesis. In Metarhizium rileyi (strain RCEF 4871) (Nomuraea rileyi), this protein is Peramine synthetase ppzA.